Consider the following 365-residue polypeptide: tRNA(Met) cytidine acetate ligase (365 aa).

ATP is bound by residues 7 to 20 (IAEF…HKYL), glycine 96, asparagine 152, and arginine 175.

This sequence belongs to the TmcAL family.

The protein resides in the cytoplasm. It carries out the reaction cytidine(34) in elongator tRNA(Met) + acetate + ATP = N(4)-acetylcytidine(34) in elongator tRNA(Met) + AMP + diphosphate. Its function is as follows. Catalyzes the formation of N(4)-acetylcytidine (ac(4)C) at the wobble position of elongator tRNA(Met), using acetate and ATP as substrates. First activates an acetate ion to form acetyladenylate (Ac-AMP) and then transfers the acetyl group to tRNA to form ac(4)C34. This is tRNA(Met) cytidine acetate ligase from Streptococcus pneumoniae (strain ATCC BAA-255 / R6).